Here is a 282-residue protein sequence, read N- to C-terminus: tRNA (guanine-N(7)-)-methyltransferase (282 aa).

Residues 1–31 are disordered; sequence MSLTDDQASKRQAYRAAKEANRKELKHVKID. Residues 16 to 31 are compositionally biased toward basic and acidic residues; that stretch reads AAKEANRKELKHVKID. S-adenosyl-L-methionine-binding positions include glycine 99, 122–123, 157–158, and cysteine 177; these read EI and NA. The active site involves aspartate 180. 255–257 contributes to the S-adenosyl-L-methionine binding site; it reads TEE.

The protein belongs to the class I-like SAM-binding methyltransferase superfamily. TrmB family. Forms a complex with TRM82.

Its subcellular location is the nucleus. It carries out the reaction guanosine(46) in tRNA + S-adenosyl-L-methionine = N(7)-methylguanosine(46) in tRNA + S-adenosyl-L-homocysteine. It functions in the pathway tRNA modification; N(7)-methylguanine-tRNA biosynthesis. Catalyzes the formation of N(7)-methylguanine at position 46 (m7G46) in tRNA. This Eremothecium gossypii (strain ATCC 10895 / CBS 109.51 / FGSC 9923 / NRRL Y-1056) (Yeast) protein is tRNA (guanine-N(7)-)-methyltransferase.